A 168-amino-acid polypeptide reads, in one-letter code: Gremlin-2 (168 aa).

Positions 1-21 (MFWKLSLTLLLVAVLVKVAET) are cleaved as a signal peptide. The N-linked (GlcNAc...) asparagine glycan is linked to asparagine 40. Disulfide bonds link cysteine 73-cysteine 123, cysteine 87-cysteine 137, cysteine 97-cysteine 155, and cysteine 101-cysteine 157. Positions 73-163 (CKTQPLRQTV…HCRCMSVNLS (91 aa)) constitute a CTCK domain. A glycan (N-linked (GlcNAc...) asparagine) is linked at asparagine 161.

The protein belongs to the DAN family. As to quaternary structure, homodimer. Interacts with BMP2, BMP4 and BMP7, but has lower affinity for BMP7 than for BMP2 and BMP4. Binds heparin; this impairs the interaction with BMP2. N-glycosylated. As to expression, highly expressed in the ovary, followed by brain, spleen, colon, kidney and uterus. In ovary expressed in granulosa cells of selective early antral follicles.

It is found in the secreted. Its function is as follows. Cytokine that inhibits the activity of BMP2 and BMP4 in a dose-dependent manner, and thereby modulates signaling by BMP family members. Contributes to the regulation of embryonic morphogenesis via BMP family members. Antagonizes BMP4-induced suppression of progesterone production in granulosa cells. In Mus musculus (Mouse), this protein is Gremlin-2 (Grem2).